Here is a 99-residue protein sequence, read N- to C-terminus: MAEPGIDKLFGMVDSKYRLTVVVAKRAQQLLRHGFKNTVLEPEERPKMQTLEGLFDDPNAVTWAMKELLTGRLVFGENLVPEDRLQKEMERLYPVEREE.

Belongs to the RNA polymerase subunit omega family. The RNAP catalytic core consists of 2 alpha, 1 beta, 1 beta' and 1 omega subunit. When a sigma factor is associated with the core the holoenzyme is formed, which can initiate transcription.

The enzyme catalyses RNA(n) + a ribonucleoside 5'-triphosphate = RNA(n+1) + diphosphate. Functionally, promotes RNA polymerase assembly. Latches the N- and C-terminal regions of the beta' subunit thereby facilitating its interaction with the beta and alpha subunits. The protein is DNA-directed RNA polymerase subunit omega of Thermus thermophilus (strain ATCC BAA-163 / DSM 7039 / HB27).